The chain runs to 197 residues: Ribosome maturation factor RimM (197 aa).

In terms of domain architecture, PRC barrel spans 92 to 164 (DEGWYEHELV…YILVTPPPGL (73 aa)). The segment at 167-197 (INVEDSGETSDAGESGPGEAEPGKAEAGDNA) is disordered. The segment covering 176–186 (SDAGESGPGEA) has biased composition (low complexity). Residues 187-197 (EPGKAEAGDNA) are compositionally biased toward basic and acidic residues.

The protein belongs to the RimM family. In terms of assembly, binds ribosomal protein uS19.

The protein localises to the cytoplasm. In terms of biological role, an accessory protein needed during the final step in the assembly of 30S ribosomal subunit, possibly for assembly of the head region. Essential for efficient processing of 16S rRNA. May be needed both before and after RbfA during the maturation of 16S rRNA. It has affinity for free ribosomal 30S subunits but not for 70S ribosomes. This chain is Ribosome maturation factor RimM, found in Arthrobacter sp. (strain FB24).